An 855-amino-acid chain; its full sequence is Putative AAA family ATPase R476 (855 aa).

The span at 1–13 (MNKRDFSELKNSE) shows a compositional bias: basic and acidic residues. Residues 1–37 (MNKRDFSELKNSESSEESSLVSSTETVRSSKRNKKFH) are disordered. Residues 17–27 (ESSLVSSTETV) are compositionally biased toward low complexity. Residue 610–617 (GPPGTGKT) participates in ATP binding.

The protein belongs to the AAA ATPase family.

The chain is Putative AAA family ATPase R476 from Acanthamoeba polyphaga mimivirus (APMV).